The sequence spans 224 residues: MGQKGCPVGFRTAVTKKWRSLWYGNNQEFGKFLIEDVRIREFLKKKPSCQGAAGFVVKRMSGKIEVTIHTARPGLVIGKKGAEVESLKAELKKLTGKDVWVEIAEVKRPELNAQLVADGIAKQIERRVSFRRAMKKALQSVMDAGALGVKVQVSGRLAGAEIARSEWYKNGRVPLHTLRADIDYATASAETTYGIIGIKVWINLGEKKAVPAANHAGAASTAAA.

The KH type-2 domain maps to 39–107 (IREFLKKKPS…DVWVEIAEVK (69 aa)).

This sequence belongs to the universal ribosomal protein uS3 family. In terms of assembly, part of the 30S ribosomal subunit. Forms a tight complex with proteins S10 and S14.

In terms of biological role, binds the lower part of the 30S subunit head. Binds mRNA in the 70S ribosome, positioning it for translation. In Chlamydia muridarum (strain MoPn / Nigg), this protein is Small ribosomal subunit protein uS3.